Reading from the N-terminus, the 496-residue chain is Lysine--tRNA ligase (496 aa).

Residues Glu408 and Glu415 each coordinate Mg(2+).

The protein belongs to the class-II aminoacyl-tRNA synthetase family. Homodimer. Mg(2+) serves as cofactor.

The protein localises to the cytoplasm. It carries out the reaction tRNA(Lys) + L-lysine + ATP = L-lysyl-tRNA(Lys) + AMP + diphosphate. The sequence is that of Lysine--tRNA ligase from Legionella pneumophila (strain Lens).